Consider the following 307-residue polypeptide: tRNA N6-adenosine threonylcarbamoyltransferase (307 aa).

The Fe cation site is built by H108 and H112. Substrate-binding positions include 131–135, D164, G177, D181, and N266; that span reads IVSGG. Residue D290 participates in Fe cation binding.

Belongs to the KAE1 / TsaD family. The cofactor is Fe(2+).

The protein localises to the cytoplasm. The catalysed reaction is L-threonylcarbamoyladenylate + adenosine(37) in tRNA = N(6)-L-threonylcarbamoyladenosine(37) in tRNA + AMP + H(+). Its function is as follows. Required for the formation of a threonylcarbamoyl group on adenosine at position 37 (t(6)A37) in tRNAs that read codons beginning with adenine. Is involved in the transfer of the threonylcarbamoyl moiety of threonylcarbamoyl-AMP (TC-AMP) to the N6 group of A37, together with TsaE and TsaB. TsaD likely plays a direct catalytic role in this reaction. The protein is tRNA N6-adenosine threonylcarbamoyltransferase of Mycoplasmopsis synoviae (strain 53) (Mycoplasma synoviae).